The primary structure comprises 87 residues: Cell division topological specificity factor (87 aa).

The protein belongs to the MinE family.

Functionally, prevents the cell division inhibition by proteins MinC and MinD at internal division sites while permitting inhibition at polar sites. This ensures cell division at the proper site by restricting the formation of a division septum at the midpoint of the long axis of the cell. In Rhizobium meliloti (strain 1021) (Ensifer meliloti), this protein is Cell division topological specificity factor.